We begin with the raw amino-acid sequence, 728 residues long: Catalase-peroxidase (728 aa).

The interval 1–26 (MDNPTDTAGKCPVAHGNKPRGPSNRD) is disordered. The tryptophyl-tyrosyl-methioninium (Trp-Tyr) (with M-244) cross-link spans 96 to 218 (WHSAGTYRIT…LGAVQMGLIY (123 aa)). The active-site Proton acceptor is His97. Residues 218-244 (YVNPEGPGGNPDPLASARDIRETFARM) constitute a cross-link (tryptophyl-tyrosyl-methioninium (Tyr-Met) (with W-96)). His259 serves as a coordination point for heme b.

This sequence belongs to the peroxidase family. Peroxidase/catalase subfamily. In terms of assembly, homodimer or homotetramer. Requires heme b as cofactor. Formation of the three residue Trp-Tyr-Met cross-link is important for the catalase, but not the peroxidase activity of the enzyme.

It carries out the reaction H2O2 + AH2 = A + 2 H2O. The enzyme catalyses 2 H2O2 = O2 + 2 H2O. Bifunctional enzyme with both catalase and broad-spectrum peroxidase activity. The chain is Catalase-peroxidase from Rhizobium etli (strain CIAT 652).